A 461-amino-acid polypeptide reads, in one-letter code: Argininosuccinate lyase (461 aa).

It belongs to the lyase 1 family. Argininosuccinate lyase subfamily.

Its subcellular location is the cytoplasm. The enzyme catalyses 2-(N(omega)-L-arginino)succinate = fumarate + L-arginine. It functions in the pathway amino-acid biosynthesis; L-arginine biosynthesis; L-arginine from L-ornithine and carbamoyl phosphate: step 3/3. This chain is Argininosuccinate lyase, found in Chlorobium luteolum (strain DSM 273 / BCRC 81028 / 2530) (Pelodictyon luteolum).